The primary structure comprises 333 residues: Phenylalanine--tRNA ligase alpha subunit (333 aa).

Glu-248 is a binding site for Mg(2+).

This sequence belongs to the class-II aminoacyl-tRNA synthetase family. Phe-tRNA synthetase alpha subunit type 1 subfamily. Tetramer of two alpha and two beta subunits. It depends on Mg(2+) as a cofactor.

The protein localises to the cytoplasm. The enzyme catalyses tRNA(Phe) + L-phenylalanine + ATP = L-phenylalanyl-tRNA(Phe) + AMP + diphosphate + H(+). In Ureaplasma urealyticum serovar 10 (strain ATCC 33699 / Western), this protein is Phenylalanine--tRNA ligase alpha subunit.